The following is a 216-amino-acid chain: Minor fimbrial subunit HifD (216 aa).

The signal sequence occupies residues 1–19 (MQKTPKKLTALCHQQSTAS). Cysteine 20 carries the N-palmitoyl cysteine lipid modification. The S-diacylglycerol cysteine moiety is linked to residue cysteine 20. Residues 159–180 (PINVDGSQANSEKAPDTGKEQN) are disordered.

Belongs to the fimbrial protein family.

The protein resides in the cell membrane. It localises to the fimbrium. May be a minor structural protein required for pilus biogenesis. This Haemophilus influenzae protein is Minor fimbrial subunit HifD (hifD).